The chain runs to 534 residues: Coiled-coil domain-containing protein 183 (534 aa).

Coiled coils occupy residues 10–54 (EAQI…NLRR), 136–209 (DATK…DMTV), and 321–406 (RFLA…LLVI).

This Mus musculus (Mouse) protein is Coiled-coil domain-containing protein 183 (Ccdc183).